A 213-amino-acid polypeptide reads, in one-letter code: Protein Syd (213 aa).

It belongs to the Syd family.

Its subcellular location is the cell inner membrane. In terms of biological role, interacts with the SecY protein in vivo. May bind preferentially to an uncomplexed state of SecY, thus functioning either as a chelating agent for excess SecY in the cell or as a regulatory factor that negatively controls the translocase function. The chain is Protein Syd from Shewanella halifaxensis (strain HAW-EB4).